A 495-amino-acid polypeptide reads, in one-letter code: RuBisCO large subunit-binding protein subunit alpha (495 aa).

The protein belongs to the chaperonin (HSP60) family. As to quaternary structure, oligomer of probably six alpha and six beta subunits.

Its subcellular location is the plastid. It is found in the chloroplast. Its function is as follows. This protein binds RuBisCO small and large subunits and is implicated in the assembly of the enzyme oligomer. The chain is RuBisCO large subunit-binding protein subunit alpha from Ricinus communis (Castor bean).